The primary structure comprises 36 residues: Photosystem I reaction center subunit VIII (36 aa).

The chain crosses the membrane as a helical span at residues 8–28 (SVLVPLVGLVFPAIAMASLFL).

It belongs to the PsaI family.

The protein localises to the plastid. The protein resides in the chloroplast thylakoid membrane. May help in the organization of the PsaL subunit. This Helianthus annuus (Common sunflower) protein is Photosystem I reaction center subunit VIII.